A 223-amino-acid polypeptide reads, in one-letter code: GRF1-interacting factor 3 (223 aa).

Residues 179-223 (ANNAGPNDASGGGKPDGTNMSQSGADGQGGSAARHGGGDAKTEGK) are disordered. Basic and acidic residues predominate over residues 214 to 223 (GGGDAKTEGK).

The protein belongs to the SS18 family. As to quaternary structure, interacts with GRF1. As to expression, predominantly expressed in shoot tips containing the shoot apical meristem (SAM) and flower buds. Also expressed in mature flowers.

Functionally, transcription coactivator that plays a role in the regulation of cell expansion in leaf and cotyledons tissues. Component of a network formed by miR396, the GRFs and their interacting factors (GIFs) acting in the regulation of meristem function, at least partially through the control of cell proliferation. GIFs are involved in the positive regulation of cell proliferation of lateral organs in a functionally redundant manner. The polypeptide is GRF1-interacting factor 3 (GIF3) (Arabidopsis thaliana (Mouse-ear cress)).